We begin with the raw amino-acid sequence, 540 residues long: MCRAVAGVTRFVFTLALGVGSAHVTHAMKKKTSVSEQPEQRTYEVRTFGCQMNVHDSERLSGLLEDSGYQPAANGEEPDVLVFNTCAVRENADNRLYGTLAMVKPMKDRNPGMQIAVGGCMAQKDKDAVVDRAPWVDVVFGTHNIGSLPTLLERSAHNQRAEVEILDSLEEFPSVLPAKRESAYSGWVSVSVGCNNTCTFCIVPSLRGKEQDRRPGEILAEVQALVDQGVQEVTLLGQNVNAYGVNFADEDLPRDRGAFAKLLRACGEIEGLERLRFTSPHPAEFTDDVIDAMAETPNVCPQLHMPLQSGSDRILKEMRRSYRSKKFLGILDKVRERIPHAAITTDIIVGFPGETEEDFQATLDVVEKARFSCAFTFQYSPRPGTPAATMPDQIPKAVVQERYERLIALQERIQAEDNKELVGTTQELLVQETGGRKDAQRHRMSGRARDGRLVHFTPSEDVRPGDIVEVTITDARPFFLIADGPLVNHRLTKAGDMSGAGQTPTTAPIGVSLGVPTIGIKPQADATAAPKNVHEGCGCD.

In terms of domain architecture, MTTase N-terminal spans R41–H157. Residues C50, C86, C120, C194, C198, and C201 each contribute to the [4Fe-4S] cluster site. Residues R180–E416 enclose the Radical SAM core domain. The TRAM domain occupies K419–L486.

Belongs to the methylthiotransferase family. MiaB subfamily. As to quaternary structure, monomer. The cofactor is [4Fe-4S] cluster.

It is found in the cytoplasm. It catalyses the reaction N(6)-dimethylallyladenosine(37) in tRNA + (sulfur carrier)-SH + AH2 + 2 S-adenosyl-L-methionine = 2-methylsulfanyl-N(6)-dimethylallyladenosine(37) in tRNA + (sulfur carrier)-H + 5'-deoxyadenosine + L-methionine + A + S-adenosyl-L-homocysteine + 2 H(+). In terms of biological role, catalyzes the methylthiolation of N6-(dimethylallyl)adenosine (i(6)A), leading to the formation of 2-methylthio-N6-(dimethylallyl)adenosine (ms(2)i(6)A) at position 37 in tRNAs that read codons beginning with uridine. The polypeptide is tRNA-2-methylthio-N(6)-dimethylallyladenosine synthase (Corynebacterium urealyticum (strain ATCC 43042 / DSM 7109)).